A 356-amino-acid chain; its full sequence is Glutamine synthetase (356 aa).

A GS beta-grasp domain is found at 26–105; that stretch reads IMAEYVWVDA…VLAECWNAGG (80 aa). Positions 112–356 constitute a GS catalytic domain; that stretch reads FRHDCVKVMD…TKALLQFSLA (245 aa).

It belongs to the glutamine synthetase family. In terms of assembly, homooctamer.

It is found in the cytoplasm. The catalysed reaction is L-glutamate + NH4(+) + ATP = L-glutamine + ADP + phosphate + H(+). In Fusarium solani subsp. phaseoli (Nectria haematococca), this protein is Glutamine synthetase (GLN1).